The primary structure comprises 199 residues: MTSRRKLILASQSPRRRELLAMTGIPFETASVEIDETFDPALTVEKNVMAISKQKAEAVMWTLPQDAGEAIVLGSDTTVVLDGAALGKPGDADHAFEMLSALQGRSHEVLTGFCILHDGKAITDYARTIVEIGAMTPGEITRYIEVMKPFDKAGSYGIQDPLLACFVTGIDGCYYNVVGLPVSKVYAALKPLFPLDANR.

The active-site Proton acceptor is Asp-76.

The protein belongs to the Maf family. YhdE subfamily. A divalent metal cation is required as a cofactor.

The protein localises to the cytoplasm. The catalysed reaction is dTTP + H2O = dTMP + diphosphate + H(+). The enzyme catalyses UTP + H2O = UMP + diphosphate + H(+). Its function is as follows. Nucleoside triphosphate pyrophosphatase that hydrolyzes dTTP and UTP. May have a dual role in cell division arrest and in preventing the incorporation of modified nucleotides into cellular nucleic acids. This Chlorobaculum parvum (strain DSM 263 / NCIMB 8327) (Chlorobium vibrioforme subsp. thiosulfatophilum) protein is dTTP/UTP pyrophosphatase.